Consider the following 341-residue polypeptide: Glucokinase (341 aa).

18–23 (GDIGGT) is an ATP binding site.

Belongs to the bacterial glucokinase family.

The protein localises to the cytoplasm. The catalysed reaction is D-glucose + ATP = D-glucose 6-phosphate + ADP + H(+). This chain is Glucokinase, found in Rhizobium leguminosarum bv. trifolii (strain WSM2304).